The primary structure comprises 111 residues: UPF0060 membrane protein Krad_3114 (111 aa).

A run of 4 helical transmembrane segments spans residues 7 to 27 (IALF…VWQG), 33 to 53 (GLAW…AATL), 62 to 82 (VLAA…AVVD), and 88 to 108 (RFDV…MYAP).

This sequence belongs to the UPF0060 family.

It is found in the cell membrane. This chain is UPF0060 membrane protein Krad_3114, found in Kineococcus radiotolerans (strain ATCC BAA-149 / DSM 14245 / SRS30216).